The following is a 551-amino-acid chain: Colicin E3 (551 aa).

3 disordered regions span residues M1–G74, T243–D269, and P293–E320. The translocation (T) domain stretch occupies residues M1 to P315. A compositionally biased stretch (gly residues) spans I20–D35. Positions D35 to W39 match the Binds to TolB motif. Low complexity predominate over residues G36–P45. Residues W46–G74 show a composition bias toward gly residues. The segment covering V296–E320 has biased composition (basic and acidic residues). Residues V316–F378 are a coiled coil. The interval V316–K450 is receptor-binding (R) domain. A Hairpin motif is present at residues A379–G385. Positions G386–K450 form a coiled coil. Positions N406–K505 are disordered. Over residues E430 to N472 the composition is skewed to basic and acidic residues. The interval N451–G456 is linker. Residues K455–L551 form a ribosome inactivating activity region. The interval F457–L551 is cytotoxic RNase (C) domain. H513 serves as the catalytic Proton donor. E517 (proton acceptor) is an active-site residue. The disordered stretch occupies residues E517–L551. Positions F530–L551 are binding of immunity protein. R545 is a catalytic residue.

Belongs to the cloacin colicin family. As to quaternary structure, native colicin E3 is a 1:1 complex of A chain and protein B (cognate immunity protein, Im3); protein A is 1,000-fold more active in inactivating ribosomes than the native complex. The cytotoxic fragment (residues 456-551, C95) forms a 1:1 complex with Im3. The receptor-binding (R) domain binds obliquely to its receptor BtuB without displacing BtuB's central plug; binding unfolds the R domain. The N-terminal 83 residues (T83) bind OmpF; trimeric complexes with colicin E3, BtuB and OmpF can be cross-linked and immunoprecipitated. Probably inserts into the OmpF pore as an unfolded peptide and spans the OmpF pore. In a complex with T.thermophilus 70S ribosomes, cytotoxic fragment C96 contacts 16S rRNA, 23S rRNA, mRNA, P-site tRNA and ribosomal protein uS12.

The protein localises to the secreted. In terms of biological role, colicins are polypeptide toxins produced by and active against E.coli and closely related bacteria. Cleaves 16S rRNA between adenosine-1492 and guanosine-1493 (E.coli 16S rRNA numbering), releasing a 49 nucleotide (nt) 'colicin' fragment. Inactivates 70S ribosomes or 30S subunits by endonucleolytically cleaving 16S RNA at a specific site about 50 nt from its C-terminus. Produces 5'-OH-guanosine and a 2',3'-cyclic phosphate adenosine. Mixing a susceptible (e.g. strain K12 / A19) and colicin E3 producing strain results in total protein translation inhibition within 11 minutes. Its activity is inhibited by cognate immunity protein Im3. Its function is as follows. Uses BtuB, the vitamin B transporter, as a receptor on the outer membrane; binds via the receptor (R) domain. Then the translocation domain (T) probably 'fishes' for its outer membrane translocon protein, OmpF. The N-terminal 83 residues (T83) can bind to and occlude OmpF channels. A complex of the cytotoxic C-terminal 96 residues (C96) plus the immunity protein does not occlude OmpF; upon complex separation from the immunity protein C96 becomes disordered and is able to bind OmpF. The N-terminus probably binds TolB and then reinserts into an empty pore of trimeric OmpF; the rest of the protein is pulled through OmpF and crosses the inner membrane, where the cytotoxic fragment is probably released by protease FtsH. The protein is Colicin E3 (ceaC) of Escherichia coli.